Here is an 84-residue protein sequence, read N- to C-terminus: U4-theraphotoxin-Hhn1aa (84 aa).

Positions 1 to 22 are cleaved as a signal peptide; that stretch reads MKVTLIAILTCAAVLVLHTTAA. The propeptide occupies 23–47; that stretch reads EELEESQLMEVGMPDTELAAVDEER. Disulfide bonds link cysteine 51–cysteine 65 and cysteine 55–cysteine 76.

The protein belongs to the neurotoxin 12 (Hwtx-2) family. 02 (Hwtx-2) subfamily. As to expression, expressed by the venom gland.

Its subcellular location is the secreted. In terms of biological role, postsynaptic neurotoxin. The sequence is that of U4-theraphotoxin-Hhn1aa from Cyriopagopus hainanus (Chinese bird spider).